The following is a 193-amino-acid chain: ATP synthase subunit b 1 (193 aa).

The tract at residues 13–32 (PAVTGGDTHSGTGVPAEAHG) is disordered. The helical transmembrane segment at 40-60 (ATFPSQLLWLAITFGLFYLFL) threads the bilayer.

This sequence belongs to the ATPase B chain family. F-type ATPases have 2 components, F(1) - the catalytic core - and F(0) - the membrane proton channel. F(1) has five subunits: alpha(3), beta(3), gamma(1), delta(1), epsilon(1). F(0) has three main subunits: a(1), b(2) and c(10-14). The alpha and beta chains form an alternating ring which encloses part of the gamma chain. F(1) is attached to F(0) by a central stalk formed by the gamma and epsilon chains, while a peripheral stalk is formed by the delta and b chains.

It is found in the cell inner membrane. Functionally, f(1)F(0) ATP synthase produces ATP from ADP in the presence of a proton or sodium gradient. F-type ATPases consist of two structural domains, F(1) containing the extramembraneous catalytic core and F(0) containing the membrane proton channel, linked together by a central stalk and a peripheral stalk. During catalysis, ATP synthesis in the catalytic domain of F(1) is coupled via a rotary mechanism of the central stalk subunits to proton translocation. Component of the F(0) channel, it forms part of the peripheral stalk, linking F(1) to F(0). This chain is ATP synthase subunit b 1, found in Mesorhizobium japonicum (strain LMG 29417 / CECT 9101 / MAFF 303099) (Mesorhizobium loti (strain MAFF 303099)).